Reading from the N-terminus, the 364-residue chain is Aminomethyltransferase (364 aa).

The protein belongs to the GcvT family. As to quaternary structure, the glycine cleavage system is composed of four proteins: P, T, L and H.

It catalyses the reaction N(6)-[(R)-S(8)-aminomethyldihydrolipoyl]-L-lysyl-[protein] + (6S)-5,6,7,8-tetrahydrofolate = N(6)-[(R)-dihydrolipoyl]-L-lysyl-[protein] + (6R)-5,10-methylene-5,6,7,8-tetrahydrofolate + NH4(+). Functionally, the glycine cleavage system catalyzes the degradation of glycine. The sequence is that of Aminomethyltransferase from Shigella flexneri serotype 5b (strain 8401).